The primary structure comprises 493 residues: Angiopoietin-related protein 2 (493 aa).

Residues 1-22 (MRPLCVTCWWLGLLAAMGAVAG) form the signal peptide. Coiled-coil stretches lie at residues 76–115 (PEVL…VDGG) and 152–206 (ALEL…HCQR). N-linked (GlcNAc...) asparagine glycosylation is found at Asn-164 and Asn-192. The 221-residue stretch at 269–489 (DKPSGPWRDC…KVVMMIRPNP (221 aa)) folds into the Fibrinogen C-terminal domain. Cystine bridges form between Cys-278/Cys-307 and Cys-430/Cys-443.

N-glycosylated. As to expression, widely expressed in heart, small intestine, spleen and stomach. Also found in lower levels in colon, ovary, adrenal gland, skeletal muscle and in prostate.

It is found in the secreted. Induces sprouting in endothelial cells through an autocrine and paracrine action. This is Angiopoietin-related protein 2 (ANGPTL2) from Homo sapiens (Human).